A 224-amino-acid polypeptide reads, in one-letter code: Uridylate kinase (224 aa).

8-12 (KITGK) contributes to the ATP binding site. Gly-43 lines the UMP pocket. Residues Gly-44 and Arg-48 each coordinate ATP. UMP contacts are provided by residues Asp-66 and 114–120 (LIPGQST). Residues Ser-140, Tyr-146, and Asp-149 each contribute to the ATP site.

Belongs to the UMP kinase family. Homohexamer.

The protein localises to the cytoplasm. It catalyses the reaction UMP + ATP = UDP + ADP. It participates in pyrimidine metabolism; CTP biosynthesis via de novo pathway; UDP from UMP (UMPK route): step 1/1. Its activity is regulated as follows. Inhibited by UTP. Functionally, catalyzes the reversible phosphorylation of UMP to UDP. In Staphylothermus marinus (strain ATCC 43588 / DSM 3639 / JCM 9404 / F1), this protein is Uridylate kinase.